The primary structure comprises 91 residues: Cell division topological specificity factor (91 aa).

It belongs to the MinE family.

Prevents the cell division inhibition by proteins MinC and MinD at internal division sites while permitting inhibition at polar sites. This ensures cell division at the proper site by restricting the formation of a division septum at the midpoint of the long axis of the cell. The protein is Cell division topological specificity factor of Desulfitobacterium hafniense (strain DSM 10664 / DCB-2).